Here is a 403-residue protein sequence, read N- to C-terminus: Phosphopentomutase (403 aa).

6 residues coordinate Mn(2+): Asp-13, Asp-298, His-303, Asp-339, His-340, and His-351.

It belongs to the phosphopentomutase family. Requires Mn(2+) as cofactor.

It is found in the cytoplasm. It carries out the reaction 2-deoxy-alpha-D-ribose 1-phosphate = 2-deoxy-D-ribose 5-phosphate. It catalyses the reaction alpha-D-ribose 1-phosphate = D-ribose 5-phosphate. The protein operates within carbohydrate degradation; 2-deoxy-D-ribose 1-phosphate degradation; D-glyceraldehyde 3-phosphate and acetaldehyde from 2-deoxy-alpha-D-ribose 1-phosphate: step 1/2. Isomerase that catalyzes the conversion of deoxy-ribose 1-phosphate (dRib-1-P) and ribose 1-phosphate (Rib-1-P) to deoxy-ribose 5-phosphate (dRib-5-P) and ribose 5-phosphate (Rib-5-P), respectively. This is Phosphopentomutase from Streptococcus pyogenes serotype M2 (strain MGAS10270).